Consider the following 431-residue polypeptide: Hydroxylamine reductase (431 aa).

The [4Fe-4S] cluster site is built by C5, C8, C17, and C23. Hybrid [4Fe-2O-2S] cluster contacts are provided by H131, E155, C199, C286, C314, C339, E373, and K375. At C286 the chain carries Cysteine persulfide.

The protein belongs to the HCP family. [4Fe-4S] cluster serves as cofactor. Requires hybrid [4Fe-2O-2S] cluster as cofactor.

It localises to the cytoplasm. It catalyses the reaction A + NH4(+) + H2O = hydroxylamine + AH2 + H(+). In terms of biological role, catalyzes the reduction of hydroxylamine to form NH(3) and H(2)O. This is Hydroxylamine reductase from Thermotoga petrophila (strain ATCC BAA-488 / DSM 13995 / JCM 10881 / RKU-1).